A 428-amino-acid polypeptide reads, in one-letter code: Adenylosuccinate synthetase (428 aa).

Residues 12-18 and 40-42 each bind GTP; these read GDEGKGK and GHT. Asp13 (proton acceptor) is an active-site residue. Positions 13 and 40 each coordinate Mg(2+). Residues 13-16, 38-41, Thr129, Arg143, Gln224, Thr239, and Arg303 each bind IMP; these read DEGK and NAGH. His41 functions as the Proton donor in the catalytic mechanism. Substrate is bound at residue 299-305; it reads VTTGRIR. Residues Arg305, 331–333, and 410–412 contribute to the GTP site; these read KVD and AYG.

Belongs to the adenylosuccinate synthetase family. In terms of assembly, homodimer. It depends on Mg(2+) as a cofactor.

Its subcellular location is the cytoplasm. The enzyme catalyses IMP + L-aspartate + GTP = N(6)-(1,2-dicarboxyethyl)-AMP + GDP + phosphate + 2 H(+). Its pathway is purine metabolism; AMP biosynthesis via de novo pathway; AMP from IMP: step 1/2. Functionally, plays an important role in the de novo pathway of purine nucleotide biosynthesis. Catalyzes the first committed step in the biosynthesis of AMP from IMP. In Francisella tularensis subsp. novicida (strain U112), this protein is Adenylosuccinate synthetase.